Reading from the N-terminus, the 309-residue chain is MKITILSGGTGTPKLIQGFKEILPNEDISVIVNTGEDTYIGDIYLSPDIDTVLYTFSNLINDETWYGLKGDTFFCHEQLKNFGFDEVLRIGDKDRALKMHKTSLLKKGVPMSEIVDIERKSLSINSKIYPMSDEKIESKVLIEENNEKILLKFHDFWVSRRGNAKVLDIFYENSNYAKAADGVLKAIEESDFVIIGPSNPITSIGPILSISEIKDALKEKLVFAVSPIVGENPVSGPAGTLMHAKGYPVNAVGVYEYYKDIVDVLVLDNSDINKKKEMNCEVLYANTIMKTIDDKITLARNILDYYKSR.

Residues D50 and R89 each contribute to the 7,8-didemethyl-8-hydroxy-5-deazariboflavin site.

Belongs to the CofD family. As to quaternary structure, homodimer. Mg(2+) serves as cofactor.

It catalyses the reaction (2S)-lactyl-2-diphospho-5'-guanosine + 7,8-didemethyl-8-hydroxy-5-deazariboflavin = oxidized coenzyme F420-0 + GMP + H(+). The protein operates within cofactor biosynthesis; coenzyme F420 biosynthesis. Functionally, catalyzes the transfer of the 2-phospholactate moiety from (2S)-lactyl-2-diphospho-5'-guanosine to 7,8-didemethyl-8-hydroxy-5-deazariboflavin (FO) with the formation of oxidized coenzyme F420-0 and GMP. In Methanococcus maripaludis (strain DSM 14266 / JCM 13030 / NBRC 101832 / S2 / LL), this protein is 2-phospho-L-lactate transferase.